Reading from the N-terminus, the 171-residue chain is bZIP transcription factor 2 (171 aa).

Residues 1–24 (MASSSSTYRSSSSSDGGNNNPSDS) show a composition bias toward low complexity. A disordered region spans residues 1-54 (MASSSSTYRSSSSSDGGNNNPSDSVVTVDERKRKRMLSNRESARRSRMRKQKHV). Positions 29 to 92 (DERKRKRMLS…MKIQAENSVL (64 aa)) constitute a bZIP domain. A basic motif region spans residues 31-52 (RKRKRMLSNRESARRSRMRKQK). Residues 57–71 (LTAQINQLSNDNRQI) are leucine-zipper.

Forms heterodimers with BZIP9, BZIP10, BZIP25 and BZIP63. Component of a ternary complex composed of BZIP2-BZIP63 heterodimer and KIN10.

It localises to the nucleus. Transcription factor that binds to specific DNA sequences in target gene promoters. BZIP2-BZIP63-KIN10 complex binds to the ETFQO promoter to up-regulate its transcription. The sequence is that of bZIP transcription factor 2 from Arabidopsis thaliana (Mouse-ear cress).